The following is a 243-amino-acid chain: Segregation and condensation protein A (243 aa).

The protein belongs to the ScpA family. As to quaternary structure, component of a cohesin-like complex composed of ScpA, ScpB and the Smc homodimer, in which ScpA and ScpB bind to the head domain of Smc. The presence of the three proteins is required for the association of the complex with DNA.

Its subcellular location is the cytoplasm. Participates in chromosomal partition during cell division. May act via the formation of a condensin-like complex containing Smc and ScpB that pull DNA away from mid-cell into both cell halves. This Staphylococcus haemolyticus (strain JCSC1435) protein is Segregation and condensation protein A.